The following is a 192-amino-acid chain: UPF0312 protein PFLU_5725 (192 aa).

The signal sequence occupies residues 1-23 (MLKKTLAALAIGTALLSAGQVMA).

Belongs to the UPF0312 family. Type 1 subfamily.

It is found in the periplasm. This is UPF0312 protein PFLU_5725 from Pseudomonas fluorescens (strain SBW25).